A 466-amino-acid polypeptide reads, in one-letter code: GTPase Der (466 aa).

2 consecutive EngA-type G domains span residues 30 to 193 and 203 to 376; these read PVVA…PEVS and RRVA…ASWD. Residues 36–43, 83–87, 145–148, 209–216, 256–260, and 321–324 each bind GTP; these read GRPNVGKS, DTGGW, NKVD, GKPNVGKS, DTAGL, and NKWD. In terms of domain architecture, KH-like spans 377 to 459; it reads TRIATGPLNS…PIRINVRVRE (83 aa).

It belongs to the TRAFAC class TrmE-Era-EngA-EngB-Septin-like GTPase superfamily. EngA (Der) GTPase family. In terms of assembly, associates with the 50S ribosomal subunit.

Its function is as follows. GTPase that plays an essential role in the late steps of ribosome biogenesis. The protein is GTPase Der of Mycobacterium avium (strain 104).